Consider the following 120-residue polypeptide: Reprimo-like protein (120 aa).

The helical transmembrane segment at 67–87 (VAQIAVLCVLSLTVVFGVFFL) threads the bilayer. Serine 109 carries the phosphoserine modification.

It belongs to the reprimo family.

The protein localises to the membrane. The sequence is that of Reprimo-like protein (RPRML) from Homo sapiens (Human).